An 89-amino-acid polypeptide reads, in one-letter code: Small ribosomal subunit protein uS14A (89 aa).

This sequence belongs to the universal ribosomal protein uS14 family. In terms of assembly, part of the 30S ribosomal subunit. Contacts proteins S3 and S10.

Its function is as follows. Binds 16S rRNA, required for the assembly of 30S particles and may also be responsible for determining the conformation of the 16S rRNA at the A site. This chain is Small ribosomal subunit protein uS14A, found in Listeria innocua serovar 6a (strain ATCC BAA-680 / CLIP 11262).